A 263-amino-acid chain; its full sequence is Diphthine synthase (263 aa).

S-adenosyl-L-methionine-binding positions include Leu9, Asp84, Met87, 112 to 113 (SI), Leu164, Ala207, and His232.

This sequence belongs to the diphthine synthase family. In terms of assembly, homodimer.

The catalysed reaction is 2-[(3S)-amino-3-carboxypropyl]-L-histidyl-[translation elongation factor 2] + 3 S-adenosyl-L-methionine = diphthine-[translation elongation factor 2] + 3 S-adenosyl-L-homocysteine + 3 H(+). It participates in protein modification; peptidyl-diphthamide biosynthesis. Functionally, S-adenosyl-L-methionine-dependent methyltransferase that catalyzes the trimethylation of the amino group of the modified target histidine residue in translation elongation factor 2 (EF-2), to form an intermediate called diphthine. The three successive methylation reactions represent the second step of diphthamide biosynthesis. The protein is Diphthine synthase of Methanosphaera stadtmanae (strain ATCC 43021 / DSM 3091 / JCM 11832 / MCB-3).